We begin with the raw amino-acid sequence, 85 residues long: U4-theraphotoxin-Hhn1a (85 aa).

The signal sequence occupies residues 1 to 22; sequence MKVTLIAILTCAAVLVLHTTAA. A propeptide spanning residues 23 to 48 is cleaved from the precursor; it reads EELEAEGQLMEVGMPDTELAAVDEER. 3 cysteine pairs are disulfide-bonded: cysteine 52–cysteine 66, cysteine 56–cysteine 77, and cysteine 71–cysteine 82.

It belongs to the neurotoxin 12 (Hwtx-2) family. 02 (Hwtx-2) subfamily. In terms of assembly, monomer. In terms of tissue distribution, expressed by the venom gland.

Its subcellular location is the secreted. Functionally, neurotoxin active on both insects and mammals. The sequence is that of U4-theraphotoxin-Hhn1a from Cyriopagopus hainanus (Chinese bird spider).